The following is a 232-amino-acid chain: Biosynthetic peptidoglycan transglycosylase (232 aa).

The chain crosses the membrane as a helical span at residues Tyr-12 to Pro-31.

The protein belongs to the glycosyltransferase 51 family.

It localises to the cell inner membrane. The enzyme catalyses [GlcNAc-(1-&gt;4)-Mur2Ac(oyl-L-Ala-gamma-D-Glu-L-Lys-D-Ala-D-Ala)](n)-di-trans,octa-cis-undecaprenyl diphosphate + beta-D-GlcNAc-(1-&gt;4)-Mur2Ac(oyl-L-Ala-gamma-D-Glu-L-Lys-D-Ala-D-Ala)-di-trans,octa-cis-undecaprenyl diphosphate = [GlcNAc-(1-&gt;4)-Mur2Ac(oyl-L-Ala-gamma-D-Glu-L-Lys-D-Ala-D-Ala)](n+1)-di-trans,octa-cis-undecaprenyl diphosphate + di-trans,octa-cis-undecaprenyl diphosphate + H(+). Its pathway is cell wall biogenesis; peptidoglycan biosynthesis. In terms of biological role, peptidoglycan polymerase that catalyzes glycan chain elongation from lipid-linked precursors. This is Biosynthetic peptidoglycan transglycosylase from Pseudomonas aeruginosa (strain ATCC 15692 / DSM 22644 / CIP 104116 / JCM 14847 / LMG 12228 / 1C / PRS 101 / PAO1).